Here is an 80-residue protein sequence, read N- to C-terminus: UPF0270 protein ASA_3305 (80 aa).

This sequence belongs to the UPF0270 family.

The polypeptide is UPF0270 protein ASA_3305 (Aeromonas salmonicida (strain A449)).